An 809-amino-acid polypeptide reads, in one-letter code: Leucine-rich repeat and calponin homology domain-containing protein (809 aa).

Residues 27-53 (GSASLPGSGTGSGSGIGHAGNTSSSTS) are disordered. The span at 34 to 44 (SGTGSGSGIGH) shows a compositional bias: gly residues. LRR repeat units follow at residues 72–96 (EAHFSGELILTNRKLKDFPRTGTKY), 98–121 (LTDTVIADLSRNRFAELPEEVTTF), 122–144 (AFLETLLLYHNTIRSIPESVKQL), 145–168 (SSLTYLDLRSNQLSSLPREICFLP), 170–189 (QVLLVSNNRLTSLPDELGRL), 191–213 (QTLTDLDASYNQLANLPARLGEL), 214–236 (RSLRSLSLRSNHLLYLPRELTCL), 238–258 (LISLDVSNNKIASLPLEIRHM), and 260–282 (TLVELQLENNPLTSPPASLCMRG). Disordered stretches follow at residues 295-373 (TKDE…LHCV), 423-442 (LSYAHSNSSSNGSSPDQDDD), and 490-550 (KHPN…VDDV). Positions 319-336 (HNSSGNVLEASTTGSTNN) are enriched in polar residues. The segment covering 351-368 (GLDKRWSHDAPTKSKTDS) has biased composition (basic and acidic residues). Polar residues predominate over residues 518–532 (NTLPKSIMKQNSNQI). In terms of domain architecture, Calponin-homology (CH) spans 662–776 (QREETELMSQ…TVGELFRLHG (115 aa)). A disordered region spans residues 783 to 809 (GNSSGAATPTKSPTRTTRATMSPTPLA). The span at 788–809 (AATPTKSPTRTTRATMSPTPLA) shows a compositional bias: polar residues.

It is found in the cytoplasm. The protein resides in the cytoskeleton. The protein localises to the cell cortex. It localises to the cleavage furrow. In terms of biological role, may play a role in the stabilization of the actin-rich cell cortex during cell division. In Drosophila melanogaster (Fruit fly), this protein is Leucine-rich repeat and calponin homology domain-containing protein.